We begin with the raw amino-acid sequence, 434 residues long: RNA-binding protein SRO9 (434 aa).

Residues 1–13 (MSAETAAANTATA) show a composition bias toward low complexity. Residues 1-243 (MSAETAAANT…FHHNQQHPQQ (243 aa)) are disordered. Positions 26-41 (SKQVNLTPAPLPTSSP) are enriched in polar residues. Phosphoserine is present on Ser55. The span at 93–124 (KRSGSKNGASNGNSNKSKNNKTAASSTSSSNA) shows a compositional bias: low complexity. Residues 125 to 140 (NRKKKHHQHNAKKQQQ) are compositionally biased toward basic residues. Ser148 carries the post-translational modification Phosphoserine. Lys156 participates in a covalent cross-link: Glycyl lysine isopeptide (Lys-Gly) (interchain with G-Cter in ubiquitin). The span at 158-167 (ATSQENGQST) shows a compositional bias: polar residues. A compositionally biased stretch (basic residues) spans 173-195 (PHHRNHHHSHHHNSNGPQRRKFH). A compositionally biased stretch (polar residues) spans 196–208 (NSNNAGMPQNQGF). Positions 218–227 (RNARNNNNNR) are enriched in low complexity. A compositionally biased stretch (basic residues) spans 228-238 (SKYHNHFHHNQ). The HTH La-type RNA-binding domain maps to 255 to 351 (VQPVLMAINN…KEGDNVTGEA (97 aa)). Residues Lys301, Lys342, and Lys352 each participate in a glycyl lysine isopeptide (Lys-Gly) (interchain with G-Cter in ubiquitin) cross-link. The tract at residues 396–434 (SLPPVPQQEEESSTELASQEQETKEDSAPVAAGESESSL) is disordered. The residue at position 422 (Ser422) is a Phosphoserine.

As to quaternary structure, interacts with HAP1. Component of the HMC including HAP1, SRO9 and YDJ1.

The protein resides in the cytoplasm. Its function is as follows. May overlap in function with tropomyosin and may be involved in organization of actin filaments. Acts as a multicopy suppressor of RHO3 mutation. RNA-binding protein which may modulate mRNA translation. Involved in heme regulation of HAP1, as a component of the high-molecular-weight complex (HMC). This is RNA-binding protein SRO9 (SRO9) from Saccharomyces cerevisiae (strain ATCC 204508 / S288c) (Baker's yeast).